The following is a 166-amino-acid chain: Crossover junction endodeoxyribonuclease RuvC (166 aa).

Residues aspartate 11, glutamate 70, and aspartate 142 contribute to the active site. 3 residues coordinate Mg(2+): aspartate 11, glutamate 70, and aspartate 142.

The protein belongs to the RuvC family. In terms of assembly, homodimer which binds Holliday junction (HJ) DNA. The HJ becomes 2-fold symmetrical on binding to RuvC with unstacked arms; it has a different conformation from HJ DNA in complex with RuvA. In the full resolvosome a probable DNA-RuvA(4)-RuvB(12)-RuvC(2) complex forms which resolves the HJ. Requires Mg(2+) as cofactor.

Its subcellular location is the cytoplasm. The catalysed reaction is Endonucleolytic cleavage at a junction such as a reciprocal single-stranded crossover between two homologous DNA duplexes (Holliday junction).. Functionally, the RuvA-RuvB-RuvC complex processes Holliday junction (HJ) DNA during genetic recombination and DNA repair. Endonuclease that resolves HJ intermediates. Cleaves cruciform DNA by making single-stranded nicks across the HJ at symmetrical positions within the homologous arms, yielding a 5'-phosphate and a 3'-hydroxyl group; requires a central core of homology in the junction. The consensus cleavage sequence is 5'-(A/T)TT(C/G)-3'. Cleavage occurs on the 3'-side of the TT dinucleotide at the point of strand exchange. HJ branch migration catalyzed by RuvA-RuvB allows RuvC to scan DNA until it finds its consensus sequence, where it cleaves and resolves the cruciform DNA. This is Crossover junction endodeoxyribonuclease RuvC from Nitratidesulfovibrio vulgaris (strain DP4) (Desulfovibrio vulgaris).